We begin with the raw amino-acid sequence, 238 residues long: tRNA (guanine-N(7)-)-methyltransferase (238 aa).

The S-adenosyl-L-methionine site is built by E68, E93, D120, and D143. The active site involves D143. Substrate contacts are provided by residues K147, D179, and 216-219 (TKFE).

Belongs to the class I-like SAM-binding methyltransferase superfamily. TrmB family.

It carries out the reaction guanosine(46) in tRNA + S-adenosyl-L-methionine = N(7)-methylguanosine(46) in tRNA + S-adenosyl-L-homocysteine. Its pathway is tRNA modification; N(7)-methylguanine-tRNA biosynthesis. In terms of biological role, catalyzes the formation of N(7)-methylguanine at position 46 (m7G46) in tRNA. This is tRNA (guanine-N(7)-)-methyltransferase from Shewanella frigidimarina (strain NCIMB 400).